The sequence spans 135 residues: uncharacterized protein (135 aa).

The interval methionine 1–alanine 80 is disordered. Residues glycine 54–glycine 65 show a composition bias toward gly residues.

This is an uncharacterized protein from Homo sapiens (Human).